Consider the following 425-residue polypeptide: Serine--tRNA ligase (425 aa).

Residue T232–E234 coordinates L-serine. ATP is bound by residues R263 to E265 and V279. An L-serine-binding site is contributed by E286. E350–S353 provides a ligand contact to ATP. T387 is a binding site for L-serine.

Belongs to the class-II aminoacyl-tRNA synthetase family. Type-1 seryl-tRNA synthetase subfamily. As to quaternary structure, homodimer. The tRNA molecule binds across the dimer.

It is found in the cytoplasm. It catalyses the reaction tRNA(Ser) + L-serine + ATP = L-seryl-tRNA(Ser) + AMP + diphosphate + H(+). The enzyme catalyses tRNA(Sec) + L-serine + ATP = L-seryl-tRNA(Sec) + AMP + diphosphate + H(+). It participates in aminoacyl-tRNA biosynthesis; selenocysteinyl-tRNA(Sec) biosynthesis; L-seryl-tRNA(Sec) from L-serine and tRNA(Sec): step 1/1. Functionally, catalyzes the attachment of serine to tRNA(Ser). Is also able to aminoacylate tRNA(Sec) with serine, to form the misacylated tRNA L-seryl-tRNA(Sec), which will be further converted into selenocysteinyl-tRNA(Sec). The sequence is that of Serine--tRNA ligase from Methanoregula boonei (strain DSM 21154 / JCM 14090 / 6A8).